The primary structure comprises 413 residues: Tyrosine--tRNA ligase (413 aa).

Positions 55-64 (PTRPDLHLGH) match the 'HIGH' region motif. The 'KMSKS' region signature appears at 242-246 (KMSKS). An ATP-binding site is contributed by K245. The region spanning 346-410 (VKLSYILREC…GKKAFRRLVK (65 aa)) is the S4 RNA-binding domain.

This sequence belongs to the class-I aminoacyl-tRNA synthetase family. TyrS type 2 subfamily. In terms of assembly, homodimer.

It is found in the cytoplasm. It carries out the reaction tRNA(Tyr) + L-tyrosine + ATP = L-tyrosyl-tRNA(Tyr) + AMP + diphosphate + H(+). Catalyzes the attachment of tyrosine to tRNA(Tyr) in a two-step reaction: tyrosine is first activated by ATP to form Tyr-AMP and then transferred to the acceptor end of tRNA(Tyr). The sequence is that of Tyrosine--tRNA ligase from Synechococcus sp. (strain JA-2-3B'a(2-13)) (Cyanobacteria bacterium Yellowstone B-Prime).